Here is a 158-residue protein sequence, read N- to C-terminus: Eukaryotic translation initiation factor 5A-1 (158 aa).

Residues 1 to 10 (MSDEEHHFES) show a composition bias toward basic and acidic residues. The tract at residues 1–21 (MSDEEHHFESSDAGASKTYPQ) is disordered. Ser-2 is subject to Phosphoserine. At Lys-51 the chain carries Hypusine.

It belongs to the eIF-5A family. In terms of processing, lys-51 undergoes hypusination, a unique post-translational modification that consists in the addition of a butylamino group from spermidine to lysine side chain, leading to the formation of the unusual amino acid hypusine. eIF-5As are the only known proteins to undergo this modification, which is essential for their function. In terms of tissue distribution, expressed in leaf vasculature and inflorescence stems. Present in xylem tissue but not in phloem, and in developing vessel members, but not in mature vessels members. Detected in anthers.

Translation factor that promotes translation elongation and termination, particularly upon ribosome stalling at specific amino acid sequence contexts. Binds between the exit (E) and peptidyl (P) site of the ribosome and promotes rescue of stalled ribosome: specifically required for efficient translation of polyproline-containing peptides as well as other motifs that stall the ribosome. Acts as a ribosome quality control (RQC) cofactor by joining the RQC complex to facilitate peptidyl transfer during CAT tailing step. Involved in xylogenesis. The polypeptide is Eukaryotic translation initiation factor 5A-1 (ELF5A-1) (Arabidopsis thaliana (Mouse-ear cress)).